A 467-amino-acid polypeptide reads, in one-letter code: Chromosomal replication initiator protein DnaA (467 aa).

The tract at residues 1–85 (MTTTLWPQVL…LEVGEYAIES (85 aa)) is domain I, interacts with DnaA modulators. Positions 85–130 (SFNEPENTSVPQPLRETKAEREAAEKAASSTSKKKSDSPPKKTIKH) are domain II. The interval 87-129 (NEPENTSVPQPLRETKAEREAAEKAASSTSKKKSDSPPKKTIK) is disordered. Basic and acidic residues predominate over residues 99-109 (RETKAEREAAE). Positions 131–347 (NLNTNFTFDT…GALKRVGAFA (217 aa)) are domain III, AAA+ region. Residues Gly-175, Gly-177, Lys-178, and Thr-179 each coordinate ATP. The segment at 348–467 (QFTQQLVTVD…FNSLIRIITN (120 aa)) is domain IV, binds dsDNA.

Belongs to the DnaA family. As to quaternary structure, oligomerizes as a right-handed, spiral filament on DNA at oriC.

Its subcellular location is the cytoplasm. Plays an essential role in the initiation and regulation of chromosomal replication. ATP-DnaA binds to the origin of replication (oriC) to initiate formation of the DNA replication initiation complex once per cell cycle. Binds the DnaA box (a 9 base pair repeat at the origin) and separates the double-stranded (ds)DNA. Forms a right-handed helical filament on oriC DNA; dsDNA binds to the exterior of the filament while single-stranded (ss)DNA is stabiized in the filament's interior. The ATP-DnaA-oriC complex binds and stabilizes one strand of the AT-rich DNA unwinding element (DUE), permitting loading of DNA polymerase. After initiation quickly degrades to an ADP-DnaA complex that is not apt for DNA replication. Binds acidic phospholipids. This chain is Chromosomal replication initiator protein DnaA, found in Hydrogenovibrio crunogenus (strain DSM 25203 / XCL-2) (Thiomicrospira crunogena).